We begin with the raw amino-acid sequence, 469 residues long: Desmin (469 aa).

The tract at residues 2–107 is head; that stretch reads SQAYSSSQRV…QEFLTTRTNE (106 aa). Serine 7 carries the phosphoserine; by CDK1 modification. Position 12 is a phosphoserine; by AURKB (serine 12). Arginine 16 carries the post-translational modification Omega-N-methylarginine. At threonine 17 the chain carries Phosphothreonine; by AURKB and ROCK1. 2 positions are modified to phosphoserine; by CDK1: serine 28 and serine 32. Position 37 is an asymmetric dimethylarginine; alternate (arginine 37). An Omega-N-methylarginine; alternate modification is found at arginine 37. Serine 45 is subject to Phosphoserine. At arginine 58 the chain carries ADP-ribosylarginine. The residue at position 60 (serine 60) is a Phosphoserine; by AURKB. An Omega-N-methylarginine modification is found at arginine 70. Threonine 76 bears the Phosphothreonine; by ROCK1 mark. Serine 81 carries the post-translational modification Phosphoserine. Positions 107-415 constitute an IF rod domain; sequence EKVELQELND…KLLEGEESRI (309 aa). Positions 108 to 140 are coil 1A; that stretch reads KVELQELNDRFANYIEKVRFLEQQNAALAAEVN. The linker 1 stretch occupies residues 141-150; the sequence is RLKGREPTRV. The coil 1B stretch occupies residues 151-251; the sequence is AEIYEEELRE…HEEEIRELQA (101 aa). The tract at residues 252–267 is linker 12; the sequence is QLQEQQVQVEMDMSKP. The tract at residues 267–414 is interaction with NEB; that stretch reads PDLTAALRDI…RKLLEGEESR (148 aa). The segment at 268-286 is coil 2A; the sequence is DLTAALRDIRAQYETIAAK. The linker 2 stretch occupies residues 287–294; it reads NISEAEEW. Residues serine 289, serine 357, serine 360, and serine 423 each carry the phosphoserine modification. The tract at residues 295-411 is coil 2B; sequence YKSKVSDLTQ…ATYRKLLEGE (117 aa). Positions 412–469 are tail; the sequence is ESRINLPIQTYSALNFRETSPEQRGSEVHTKKTVMIKTIETRDGEVVSEATQQQHEVL. Residues 437-452 are interaction with CRYAB; the sequence is SEVHTKKTVMIKTIET.

Belongs to the intermediate filament family. Homomer. Interacts with DST. Interacts with MTM1. Interacts with EPPK1; interaction is dependent of higher-order structure of intermediate filament. Interacts with CRYAB. Interacts with NEB (via nebulin repeats 160-164). Interacts (via rod region) with NEBL (via nebulin repeats 1-5). Interacts with ASB2; the interaction targets DES for proteasomal degradation. Interacts with PKP1. Interacts with FLII. In terms of processing, ADP-ribosylation prevents ability to form intermediate filaments. Post-translationally, phosphorylation at Ser-7, Ser-28 and Ser-32 by CDK1, phosphorylation at Ser-60 by AURKB and phosphorylation at Thr-76 by ROCK1 contribute to efficient separation of desmin intermediate filaments during mitosis. Ubiquitination by a SCF-like complex containing ASB2 leads to proteasomal degradation.

The protein resides in the cytoplasm. It localises to the myofibril. The protein localises to the sarcomere. Its subcellular location is the z line. It is found in the cell membrane. The protein resides in the sarcolemma. It localises to the nucleus. The protein localises to the cell tip. Its subcellular location is the nucleus envelope. Functionally, muscle-specific type III intermediate filament essential for proper muscular structure and function. Plays a crucial role in maintaining the structure of sarcomeres, inter-connecting the Z-disks and forming the myofibrils, linking them not only to the sarcolemmal cytoskeleton, but also to the nucleus and mitochondria, thus providing strength for the muscle fiber during activity. In adult striated muscle they form a fibrous network connecting myofibrils to each other and to the plasma membrane from the periphery of the Z-line structures. May act as a sarcomeric microtubule-anchoring protein: specifically associates with detyrosinated tubulin-alpha chains, leading to buckled microtubules and mechanical resistance to contraction. Required for nuclear membrane integrity, via anchoring at the cell tip and nuclear envelope, resulting in maintenance of microtubule-derived intracellular mechanical forces. Contributes to the transcriptional regulation of the NKX2-5 gene in cardiac progenitor cells during a short period of cardiomyogenesis and in cardiac side population stem cells in the adult. Plays a role in maintaining an optimal conformation of nebulette (NEB) on heart muscle sarcomeres to bind and recruit cardiac alpha-actin. The protein is Desmin (DES) of Canis lupus familiaris (Dog).